The following is a 492-amino-acid chain: 5-taurinomethyluridine-[tRNA] synthase subunit GTPB3, mitochondrial (492 aa).

The N-terminal 20 residues, 1–20 (MWRGLWTLAAQAARGPRRLC), are a transit peptide targeting the mitochondrion. 3 residues coordinate 5,10-methylenetetrahydrofolate: arginine 52, glutamate 112, and lysine 152. Positions 249–416 (GVHVVVTGPP…LLEALRKELA (168 aa)) constitute a TrmE-type G domain. GTP is bound by residues 256 to 263 (GPPNAGKS), 282 to 286 (GTTRD), 303 to 306 (DTAG), 374 to 377 (NKSD), and 397 to 399 (SCL). Position 259 (asparagine 259) interacts with K(+). Serine 263 and threonine 284 together coordinate Mg(2+). Lysine 492 is a binding site for 5,10-methylenetetrahydrofolate.

Belongs to the TRAFAC class TrmE-Era-EngA-EngB-Septin-like GTPase superfamily. TrmE GTPase family. Homodimer; forms a dimer in the presence of potassium. Interacts with MTO1; forms the GTPBP3-MTO1 complex composed of homodimers of GTPBP3 and MTO1. In terms of assembly, homodimer, forms homodimer in vivo. K(+) is required as a cofactor. As to expression, ubiquitously expressed.

The protein localises to the mitochondrion. It is found in the cytoplasm. The catalysed reaction is GTP + H2O = GDP + phosphate + H(+). Functionally, GTPase component of the GTPBP3-MTO1 complex that catalyzes the 5-taurinomethyluridine (taum(5)U) modification at the 34th wobble position (U34) of mitochondrial tRNAs (mt-tRNAs), which plays a role in mt-tRNA decoding and mitochondrial translation. Taum(5)U formation on mammalian mt-tRNA requires the presence of both GTPBP3-mediated GTPase activity and MTO1 catalytic activity. This Homo sapiens (Human) protein is 5-taurinomethyluridine-[tRNA] synthase subunit GTPB3, mitochondrial.